Here is a 307-residue protein sequence, read N- to C-terminus: Nicotinamide/nicotinic acid mononucleotide adenylyltransferase 2 (307 aa).

Residues serine 16 and phenylalanine 17 each contribute to the NAD(+) site. Histidine 24 provides a ligand contact to ATP. NAD(+) is bound by residues tryptophan 92 and threonine 95. Residues cysteine 164 and cysteine 165 are each lipidated (S-palmitoyl cysteine). The NAD(+) site is built by glycine 200, aspartate 202, leucine 212, tryptophan 213, and arginine 232. Position 271 to 274 (271 to 274) interacts with ATP; sequence TKSR.

This sequence belongs to the eukaryotic NMN adenylyltransferase family. Monomer. It depends on Mg(2+) as a cofactor. In terms of processing, degraded in response to injured neurite. Degradation is caused by polyubiquitination by MYCBP2 after recognition by FBXO45. Palmitoylated; palmitoylation is required for membrane association. In terms of tissue distribution, expressed predominantly in the brain and nervous system.

It is found in the golgi apparatus membrane. The protein localises to the cytoplasmic vesicle membrane. The protein resides in the cytoplasm. Its subcellular location is the cell projection. It localises to the axon. It catalyses the reaction beta-nicotinamide D-ribonucleotide + ATP + H(+) = diphosphate + NAD(+). It carries out the reaction nicotinate beta-D-ribonucleotide + ATP + H(+) = deamido-NAD(+) + diphosphate. It functions in the pathway cofactor biosynthesis; NAD(+) biosynthesis; NAD(+) from nicotinamide D-ribonucleotide: step 1/1. Its pathway is cofactor biosynthesis; NAD(+) biosynthesis; deamido-NAD(+) from nicotinate D-ribonucleotide: step 1/1. With respect to regulation, inhibited by P1-(adenosine-5')-P3-(nicotinamide-riboside-5')-triphosphate (Np3AD) and P1-(adenosine-5')-P4-(nicotinamide-riboside-5')-tetraphosphate (Np4AD). In terms of biological role, nicotinamide/nicotinate-nucleotide adenylyltransferase that acts as an axon maintenance factor. Axon survival factor required for the maintenance of healthy axons: acts by delaying Wallerian axon degeneration, an evolutionarily conserved process that drives the loss of damaged axons. Catalyzes the formation of NAD(+) from nicotinamide mononucleotide (NMN) and ATP. Can also use the deamidated form; nicotinic acid mononucleotide (NaMN) as substrate but with a lower efficiency. Cannot use triazofurin monophosphate (TrMP) as substrate. Also catalyzes the reverse reaction, i.e. the pyrophosphorolytic cleavage of NAD(+). For the pyrophosphorolytic activity prefers NAD(+), NADH and NaAD as substrates and degrades nicotinic acid adenine dinucleotide phosphate (NHD) less effectively. Fails to cleave phosphorylated dinucleotides NADP(+), NADPH and NaADP(+). Also acts as an activator of ADP-ribosylation by supporting the catalytic activity of PARP16 and promoting mono-ADP-ribosylation of ribosomes by PARP16. May be involved in the maintenance of axonal integrity. The protein is Nicotinamide/nicotinic acid mononucleotide adenylyltransferase 2 of Mus musculus (Mouse).